We begin with the raw amino-acid sequence, 443 residues long: Thymidine phosphorylase (443 aa).

This sequence belongs to the thymidine/pyrimidine-nucleoside phosphorylase family. Homodimer.

It catalyses the reaction thymidine + phosphate = 2-deoxy-alpha-D-ribose 1-phosphate + thymine. It participates in pyrimidine metabolism; dTMP biosynthesis via salvage pathway; dTMP from thymine: step 1/2. The enzymes which catalyze the reversible phosphorolysis of pyrimidine nucleosides are involved in the degradation of these compounds and in their utilization as carbon and energy sources, or in the rescue of pyrimidine bases for nucleotide synthesis. In Shewanella baltica (strain OS223), this protein is Thymidine phosphorylase.